The chain runs to 177 residues: Acireductone dioxygenase (177 aa).

Positions 99, 101, 105, and 143 each coordinate Fe(2+). 4 residues coordinate Ni(2+): histidine 99, histidine 101, glutamate 105, and histidine 143.

It belongs to the acireductone dioxygenase (ARD) family. As to quaternary structure, monomer. Requires Fe(2+) as cofactor. The cofactor is Ni(2+).

It carries out the reaction 1,2-dihydroxy-5-(methylsulfanyl)pent-1-en-3-one + O2 = 3-(methylsulfanyl)propanoate + CO + formate + 2 H(+). The catalysed reaction is 1,2-dihydroxy-5-(methylsulfanyl)pent-1-en-3-one + O2 = 4-methylsulfanyl-2-oxobutanoate + formate + 2 H(+). Its pathway is amino-acid biosynthesis; L-methionine biosynthesis via salvage pathway; L-methionine from S-methyl-5-thio-alpha-D-ribose 1-phosphate: step 5/6. Catalyzes 2 different reactions between oxygen and the acireductone 1,2-dihydroxy-3-keto-5-methylthiopentene (DHK-MTPene) depending upon the metal bound in the active site. Fe-containing acireductone dioxygenase (Fe-ARD) produces formate and 2-keto-4-methylthiobutyrate (KMTB), the alpha-ketoacid precursor of methionine in the methionine recycle pathway. Ni-containing acireductone dioxygenase (Ni-ARD) produces methylthiopropionate, carbon monoxide and formate, and does not lie on the methionine recycle pathway. In Leptospira borgpetersenii serovar Hardjo-bovis (strain L550), this protein is Acireductone dioxygenase.